We begin with the raw amino-acid sequence, 291 residues long: Bifunctional protein FolD (291 aa).

NADP(+) contacts are provided by residues 165 to 167, S190, and I231; that span reads GRS.

It belongs to the tetrahydrofolate dehydrogenase/cyclohydrolase family. Homodimer.

It carries out the reaction (6R)-5,10-methylene-5,6,7,8-tetrahydrofolate + NADP(+) = (6R)-5,10-methenyltetrahydrofolate + NADPH. It catalyses the reaction (6R)-5,10-methenyltetrahydrofolate + H2O = (6R)-10-formyltetrahydrofolate + H(+). It functions in the pathway one-carbon metabolism; tetrahydrofolate interconversion. In terms of biological role, catalyzes the oxidation of 5,10-methylenetetrahydrofolate to 5,10-methenyltetrahydrofolate and then the hydrolysis of 5,10-methenyltetrahydrofolate to 10-formyltetrahydrofolate. This is Bifunctional protein FolD from Azoarcus sp. (strain BH72).